Reading from the N-terminus, the 220-residue chain is Ribonuclease HII (220 aa).

In terms of domain architecture, RNase H type-2 spans 1-219 (MMIAGIDEAG…VENIREELKK (219 aa)). Positions 7, 8, and 105 each coordinate a divalent metal cation.

It belongs to the RNase HII family. Requires Mn(2+) as cofactor. Mg(2+) is required as a cofactor.

It is found in the cytoplasm. It catalyses the reaction Endonucleolytic cleavage to 5'-phosphomonoester.. Its function is as follows. Endonuclease that specifically degrades the RNA of RNA-DNA hybrids. The sequence is that of Ribonuclease HII from Methanosarcina mazei (strain ATCC BAA-159 / DSM 3647 / Goe1 / Go1 / JCM 11833 / OCM 88) (Methanosarcina frisia).